We begin with the raw amino-acid sequence, 100 residues long: Small ribosomal subunit protein uS14c (100 aa).

It belongs to the universal ribosomal protein uS14 family. In terms of assembly, part of the 30S ribosomal subunit.

The protein localises to the plastid. Its subcellular location is the chloroplast. In terms of biological role, binds 16S rRNA, required for the assembly of 30S particles. The polypeptide is Small ribosomal subunit protein uS14c (Anthoceros angustus (Hornwort)).